We begin with the raw amino-acid sequence, 175 residues long: Alkyl hydroperoxide reductase AhpD (175 aa).

Residue cysteine 131 is the Proton donor of the active site. Cysteine 131 and cysteine 134 are oxidised to a cystine. The Cysteine sulfenic acid (-SOH) intermediate role is filled by cysteine 134.

It belongs to the AhpD family.

The catalysed reaction is N(6)-[(R)-dihydrolipoyl]-L-lysyl-[lipoyl-carrier protein] + a hydroperoxide = N(6)-[(R)-lipoyl]-L-lysyl-[lipoyl-carrier protein] + an alcohol + H2O. Functionally, antioxidant protein with alkyl hydroperoxidase activity. Required for the reduction of the AhpC active site cysteine residues and for the regeneration of the AhpC enzyme activity. This Brucella anthropi (strain ATCC 49188 / DSM 6882 / CCUG 24695 / JCM 21032 / LMG 3331 / NBRC 15819 / NCTC 12168 / Alc 37) (Ochrobactrum anthropi) protein is Alkyl hydroperoxide reductase AhpD.